Here is a 127-residue protein sequence, read N- to C-terminus: Large ribosomal subunit protein uL24B (127 aa).

Belongs to the universal ribosomal protein uL24 family. As to quaternary structure, component of the large ribosomal subunit (LSU). Mature yeast ribosomes consist of a small (40S) and a large (60S) subunit. The 40S small subunit contains 1 molecule of ribosomal RNA (18S rRNA) and 33 different proteins (encoded by 57 genes). The large 60S subunit contains 3 rRNA molecules (25S, 5.8S and 5S rRNA) and 46 different proteins (encoded by 81 genes).

The protein localises to the cytoplasm. In terms of biological role, component of the ribosome, a large ribonucleoprotein complex responsible for the synthesis of proteins in the cell. The small ribosomal subunit (SSU) binds messenger RNAs (mRNAs) and translates the encoded message by selecting cognate aminoacyl-transfer RNA (tRNA) molecules. The large subunit (LSU) contains the ribosomal catalytic site termed the peptidyl transferase center (PTC), which catalyzes the formation of peptide bonds, thereby polymerizing the amino acids delivered by tRNAs into a polypeptide chain. The nascent polypeptides leave the ribosome through a tunnel in the LSU and interact with protein factors that function in enzymatic processing, targeting, and the membrane insertion of nascent chains at the exit of the ribosomal tunnel. The polypeptide is Large ribosomal subunit protein uL24B (Saccharomyces cerevisiae (strain ATCC 204508 / S288c) (Baker's yeast)).